Reading from the N-terminus, the 407-residue chain is Arginine biosynthesis bifunctional protein ArgJ (407 aa).

6 residues coordinate substrate: Thr155, Lys181, Thr192, Glu278, Asn402, and Thr407. Thr192 (nucleophile) is an active-site residue.

It belongs to the ArgJ family. Heterotetramer of two alpha and two beta chains.

The protein resides in the cytoplasm. The enzyme catalyses N(2)-acetyl-L-ornithine + L-glutamate = N-acetyl-L-glutamate + L-ornithine. It carries out the reaction L-glutamate + acetyl-CoA = N-acetyl-L-glutamate + CoA + H(+). It participates in amino-acid biosynthesis; L-arginine biosynthesis; L-ornithine and N-acetyl-L-glutamate from L-glutamate and N(2)-acetyl-L-ornithine (cyclic): step 1/1. The protein operates within amino-acid biosynthesis; L-arginine biosynthesis; N(2)-acetyl-L-ornithine from L-glutamate: step 1/4. Functionally, catalyzes two activities which are involved in the cyclic version of arginine biosynthesis: the synthesis of N-acetylglutamate from glutamate and acetyl-CoA as the acetyl donor, and of ornithine by transacetylation between N(2)-acetylornithine and glutamate. In Thiobacillus denitrificans (strain ATCC 25259 / T1), this protein is Arginine biosynthesis bifunctional protein ArgJ.